A 341-amino-acid chain; its full sequence is Heat-inducible transcription repressor HrcA (341 aa).

The protein belongs to the HrcA family.

Its function is as follows. Negative regulator of class I heat shock genes (grpE-dnaK-dnaJ and groELS operons). Prevents heat-shock induction of these operons. The protein is Heat-inducible transcription repressor HrcA of Carboxydothermus hydrogenoformans (strain ATCC BAA-161 / DSM 6008 / Z-2901).